The primary structure comprises 370 residues: Anhydro-N-acetylmuramic acid kinase (370 aa).

12–19 (GTSLDGVD) is a binding site for ATP.

This sequence belongs to the anhydro-N-acetylmuramic acid kinase family.

The catalysed reaction is 1,6-anhydro-N-acetyl-beta-muramate + ATP + H2O = N-acetyl-D-muramate 6-phosphate + ADP + H(+). It functions in the pathway amino-sugar metabolism; 1,6-anhydro-N-acetylmuramate degradation. The protein operates within cell wall biogenesis; peptidoglycan recycling. Catalyzes the specific phosphorylation of 1,6-anhydro-N-acetylmuramic acid (anhMurNAc) with the simultaneous cleavage of the 1,6-anhydro ring, generating MurNAc-6-P. Is required for the utilization of anhMurNAc either imported from the medium or derived from its own cell wall murein, and thus plays a role in cell wall recycling. This chain is Anhydro-N-acetylmuramic acid kinase, found in Proteus mirabilis (strain HI4320).